A 360-amino-acid chain; its full sequence is Cysteine proteinase 2 (360 aa).

A signal peptide spans 1-19; that stretch reads MVPRRLFVLAVVVLADTAA. Positions 20-142 are cleaved as a propeptide — activation peptide; it reads VVNSGFADSN…NHRMRAAAVA (123 aa). A glycan (N-linked (GlcNAc...) asparagine) is linked at asparagine 125. 2 cysteine pairs are disulfide-bonded: cysteine 164-cysteine 207 and cysteine 198-cysteine 240. The active site involves cysteine 167. N-linked (GlcNAc...) asparagine glycosylation is present at asparagine 256. The cysteines at positions 298 and 348 are disulfide-linked. Active-site residues include histidine 307 and asparagine 327.

Belongs to the peptidase C1 family. As to expression, expressed at the onset of germination.

It is found in the vacuole. Involved in the degradation of the storage protein zein. May play a role in proteolysis during emergencies. This chain is Cysteine proteinase 2 (CCP2), found in Zea mays (Maize).